The primary structure comprises 307 residues: 4-diphosphocytidyl-2-C-methyl-D-erythritol kinase (307 aa).

Residue Lys16 is part of the active site. 101–111 contacts ATP; the sequence is PVAGGMAGGSA. The active site involves Asp143.

This sequence belongs to the GHMP kinase family. IspE subfamily.

The catalysed reaction is 4-CDP-2-C-methyl-D-erythritol + ATP = 4-CDP-2-C-methyl-D-erythritol 2-phosphate + ADP + H(+). The protein operates within isoprenoid biosynthesis; isopentenyl diphosphate biosynthesis via DXP pathway; isopentenyl diphosphate from 1-deoxy-D-xylulose 5-phosphate: step 3/6. Catalyzes the phosphorylation of the position 2 hydroxy group of 4-diphosphocytidyl-2C-methyl-D-erythritol. The chain is 4-diphosphocytidyl-2-C-methyl-D-erythritol kinase from Nocardia farcinica (strain IFM 10152).